The following is a 156-amino-acid chain: ATP synthase subunit b (156 aa).

Residues Leu7 to Ile29 traverse the membrane as a helical segment.

It belongs to the ATPase B chain family. F-type ATPases have 2 components, F(1) - the catalytic core - and F(0) - the membrane proton channel. F(1) has five subunits: alpha(3), beta(3), gamma(1), delta(1), epsilon(1). F(0) has three main subunits: a(1), b(2) and c(10-14). The alpha and beta chains form an alternating ring which encloses part of the gamma chain. F(1) is attached to F(0) by a central stalk formed by the gamma and epsilon chains, while a peripheral stalk is formed by the delta and b chains.

It localises to the cell inner membrane. F(1)F(0) ATP synthase produces ATP from ADP in the presence of a proton or sodium gradient. F-type ATPases consist of two structural domains, F(1) containing the extramembraneous catalytic core and F(0) containing the membrane proton channel, linked together by a central stalk and a peripheral stalk. During catalysis, ATP synthesis in the catalytic domain of F(1) is coupled via a rotary mechanism of the central stalk subunits to proton translocation. Functionally, component of the F(0) channel, it forms part of the peripheral stalk, linking F(1) to F(0). In Vibrio cholerae serotype O1 (strain ATCC 39541 / Classical Ogawa 395 / O395), this protein is ATP synthase subunit b.